The sequence spans 353 residues: Photosystem II D2 protein (353 aa).

T2 is subject to N-acetylthreonine. T2 is subject to Phosphothreonine. The chain crosses the membrane as a helical span at residues 41-61 (CAYFALGGWFTGTTFVTSWYT). H118 provides a ligand contact to chlorophyll a. The helical transmembrane segment at 125–141 (GFMLRQFELARSVQLRP) threads the bilayer. The pheophytin a site is built by Q130 and N143. The helical transmembrane segment at 153–166 (VFVSVFLIYPLGQS) threads the bilayer. Chlorophyll a is bound at residue H198. A helical membrane pass occupies residues 208-228 (AALLCAIHGATVENTLFEDGD). The a plastoquinone site is built by H215 and F262. H215 lines the Fe cation pocket. H269 contacts Fe cation. A helical membrane pass occupies residues 279 to 295 (GLWMSALGVVGLALNLR).

The protein belongs to the reaction center PufL/M/PsbA/D family. In terms of assembly, PSII is composed of 1 copy each of membrane proteins PsbA, PsbB, PsbC, PsbD, PsbE, PsbF, PsbH, PsbI, PsbJ, PsbK, PsbL, PsbM, PsbT, PsbX, PsbY, PsbZ, Psb30/Ycf12, at least 3 peripheral proteins of the oxygen-evolving complex and a large number of cofactors. It forms dimeric complexes. The D1/D2 heterodimer binds P680, chlorophylls that are the primary electron donor of PSII, and subsequent electron acceptors. It shares a non-heme iron and each subunit binds pheophytin, quinone, additional chlorophylls, carotenoids and lipids. There is also a Cl(-1) ion associated with D1 and D2, which is required for oxygen evolution. The PSII complex binds additional chlorophylls, carotenoids and specific lipids. is required as a cofactor.

Its subcellular location is the plastid. The protein localises to the chloroplast thylakoid membrane. The enzyme catalyses 2 a plastoquinone + 4 hnu + 2 H2O = 2 a plastoquinol + O2. Its function is as follows. Photosystem II (PSII) is a light-driven water:plastoquinone oxidoreductase that uses light energy to abstract electrons from H(2)O, generating O(2) and a proton gradient subsequently used for ATP formation. It consists of a core antenna complex that captures photons, and an electron transfer chain that converts photonic excitation into a charge separation. The D1/D2 (PsbA/PsbD) reaction center heterodimer binds P680, the primary electron donor of PSII as well as several subsequent electron acceptors. D2 is needed for assembly of a stable PSII complex. The sequence is that of Photosystem II D2 protein from Citrus sinensis (Sweet orange).